A 107-amino-acid polypeptide reads, in one-letter code: uncharacterized protein (107 aa).

Positions 86-107 are disordered; that stretch reads QVSNHEEDADVLETQDDNAEQV. Acidic residues predominate over residues 92–107; the sequence is EDADVLETQDDNAEQV.

This is an uncharacterized protein from Rickettsia prowazekii (strain Madrid E).